The sequence spans 555 residues: Dimethylaniline monooxygenase [N-oxide-forming] 4 (555 aa).

Residues 9–13, E32, and 40–41 contribute to the FAD site; these read GAGVS and LW. NADP(+)-binding positions include 60-61 and 195-198; these read TN and SGGD. Residues 515-532 traverse the membrane as a helical segment; that stretch reads YLKVWGAPLLLASVLLIC.

It belongs to the FMO family. The cofactor is FAD. As to expression, kidney and liver.

It localises to the microsome membrane. It is found in the endoplasmic reticulum membrane. It carries out the reaction N,N-dimethylaniline + NADPH + O2 + H(+) = N,N-dimethylaniline N-oxide + NADP(+) + H2O. This protein is involved in the oxidative metabolism of a variety of xenobiotics such as drugs and pesticides. The protein is Dimethylaniline monooxygenase [N-oxide-forming] 4 (FMO4) of Oryctolagus cuniculus (Rabbit).